Here is a 269-residue protein sequence, read N- to C-terminus: Glutamate racemase (269 aa).

Residues 11-12 (DS) and 43-44 (YG) each bind substrate. Cysteine 74 (proton donor/acceptor) is an active-site residue. A substrate-binding site is contributed by 75 to 76 (NT). Cysteine 185 acts as the Proton donor/acceptor in catalysis. Substrate is bound at residue 186-187 (TH).

It belongs to the aspartate/glutamate racemases family.

The enzyme catalyses L-glutamate = D-glutamate. It participates in cell wall biogenesis; peptidoglycan biosynthesis. In terms of biological role, provides the (R)-glutamate required for cell wall biosynthesis. This is Glutamate racemase from Bacillus cereus (strain G9842).